The primary structure comprises 904 residues: Toll-like receptor 3 (904 aa).

The first 23 residues, 1 to 23, serve as a signal peptide directing secretion; it reads MRQTLPCIYFWGGLLPFGMLCAS. The region spanning 24 to 51 is the LRRNT domain; sequence STTKCTVSHEVADCSHLKLTQVPDDLPT. Residues 24 to 704 lie on the Lumenal side of the membrane; the sequence is STTKCTVSHE…SCKDSAPFEL (681 aa). C28 and C37 form a disulfide bridge. N-linked (GlcNAc...) asparagine glycans are attached at residues N52, N57, and N70. LRR repeat units lie at residues 52–73, 76–97, 100–121, 124–145, 148–168, and 172–193; these read NITV…NFTR, QLTS…LCQK, MLKV…TFAF, NLTE…PFVK, NLIT…GTQV, and NLQE…ELDI. A disulfide bridge connects residues C95 and C122. N124 is a glycosylation site (N-linked (GlcNAc...) asparagine). N-linked (GlcNAc...) asparagine glycosylation occurs at N196. 2 LRR repeats span residues 198-219 and 222-244; these read SLKK…CFHA and RLFG…LCLE. Residues N247, N252, N265, N275, and N291 are each glycosylated (N-linked (GlcNAc...) asparagine). 14 LRR repeats span residues 249–270, 275–296, 299–320, 323–344, 356–377, 380–400, 408–429, 432–454, 465–486, 507–528, 531–552, 563–584, 587–608, and 611–632; these read SIRN…TFLG, NLTM…SFAW, QLEY…SLHG, NVRY…ASLP, CLEH…MFTG, NLKY…TNET, PLHI…AFSW, HLEV…EWRG, YNKY…QRLM, NLTI…MLEG, KLEI…ANPG, HLHI…VFKD, ELKI…VFNN, and SLKS…VFGP. N398 and N413 each carry an N-linked (GlcNAc...) asparagine glycan. N507 is a glycosylation site (N-linked (GlcNAc...) asparagine). Residues N636 and N662 are each glycosylated (N-linked (GlcNAc...) asparagine). Residues 645–698 form the LRRCT domain; that stretch reads NPFDCTCESIAWFVNWINETHTNIPELSSHYLCNTPPHYHGFPVRLFDTSSCKD. Intrachain disulfides connect C649-C677 and C651-C696. Residues 705–725 traverse the membrane as a helical segment; the sequence is FFMINTSILLIFIFIVLLIHF. Topologically, residues 726-904 are cytoplasmic; sequence EGWRISFYWN…VALGSKNSVH (179 aa). Positions 754 to 897 constitute a TIR domain; that stretch reads FEYAAYIIHA…AFRHKLQVAL (144 aa). The residue at position 759 (Y759) is a Phosphotyrosine. Glycyl lysine isopeptide (Lys-Gly) (interchain with G-Cter in ubiquitin) cross-links involve residues K765, K812, and K831. Y858 bears the Phosphotyrosine mark.

The protein belongs to the Toll-like receptor family. Monomer and homodimer; dimerization is triggered by ligand-binding, the signaling unit is composed of one ds-RNA of around 40 bp and two TLR3 molecules, and lateral clustering of signaling units along the length of the ds-RNA ligand is required for TLR3 signal transduction. Interacts (via transmembrane domain) with UNC93B1; the interaction is required for transport from the ER to the endosomes. Interacts with SRC; upon binding of double-stranded RNA. Interacts with TICAM1 (via the TIR domain) in response to poly(I:C) and this interaction is enhanced in the presence of WDFY1. The tyrosine-phosphorylated form (via TIR domain) interacts with WDFY1 (via WD repeat 2) in response to poly(I:C). Post-translationally, heavily N-glycosylated, except on that part of the surface of the ectodomain that is involved in ligand binding. TLR3 signaling requires a proteolytic cleavage mediated by cathepsins CTSB and CTSH, the cleavage occurs between amino acids 252 and 346. The cleaved form of TLR3 is the predominant form found in endosomes. In terms of processing, ubiquitinated by TRIM3; leading to recognition and sorting of polyubiquitinated TLR3 by the ESCRT complexes. Ubiquitinated by ZNRF1 via 'Lys-63'-linked ubiquitin chains; leading to TLR3 lysosomal trafficking and degradation. Ubiquitinated by RNF170 at Lys-765 via 'Lys-48'-linked ubiquitin chains; leading to TLR3 proteasomal degradation. Expressed at high level in placenta and pancreas. Also detected in CD11c+ immature dendritic cells. Only expressed in dendritic cells and not in other leukocytes, including monocyte precursors. TLR3 is the TLR that is expressed most strongly in the brain, especially in astrocytes, glia, and neurons.

It localises to the endoplasmic reticulum membrane. Its subcellular location is the endosome membrane. The protein resides in the early endosome. Its function is as follows. Key component of innate and adaptive immunity. TLRs (Toll-like receptors) control host immune response against pathogens through recognition of molecular patterns specific to microorganisms. TLR3 is a nucleotide-sensing TLR which is activated by double-stranded RNA, a sign of viral infection. Acts via the adapter TRIF/TICAM1, leading to NF-kappa-B activation, IRF3 nuclear translocation, cytokine secretion and the inflammatory response. The protein is Toll-like receptor 3 of Homo sapiens (Human).